The following is a 347-amino-acid chain: Protein phosphatase 1 regulatory subunit 3G (347 aa).

The segment at 1 to 77 is disordered; that stretch reads MDPSGEQLHR…ELQEYRRSRA (77 aa). Polar residues predominate over residues 13 to 22; the sequence is ASSSTSSGDP. Ser81 is modified (phosphoserine). Positions 200–339 constitute a CBM21 domain; it reads EERLRRQRVC…NNEGANYTLR (140 aa). Positions 258–286 are disordered; that stretch reads DPESVEPLPPLQSGDSGSKAEDSEEGPGT.

Glycogen-targeting subunit for protein phosphatase 1 (PP1). Involved in the regulation of hepatic glycogenesis in a manner coupled to the fasting-feeding cycle and distinct from other glycogen-targeting subunits. This Mus musculus (Mouse) protein is Protein phosphatase 1 regulatory subunit 3G (Ppp1r3g).